The sequence spans 334 residues: Phenazine-1-carboxylate N-methyltransferase (334 aa).

Asp198 and Arg241 together coordinate S-adenosyl-L-methionine.

It belongs to the class I-like SAM-binding methyltransferase superfamily. Cation-independent O-methyltransferase family. As to quaternary structure, homodimer in solution. Probably interacts transiently with PhzS.

The catalysed reaction is phenazine-1-carboxylate + S-adenosyl-L-methionine = 5-methyl-phenazine-1-carboxylate + S-adenosyl-L-homocysteine. Its pathway is secondary metabolite biosynthesis; pyocyanine biosynthesis. Its activity is regulated as follows. In vitro, requires PhzS for activity. Functionally, involved in the biosynthesis of pyocyanine, a blue-pigmented phenazine derivative, which plays a role in virulence. Converts phenazine-1-carboxylate (PCA) to 5-methylphenazine-1-carboxylate (5-methyl-PCA). This chain is Phenazine-1-carboxylate N-methyltransferase, found in Pseudomonas aeruginosa (strain ATCC 15692 / DSM 22644 / CIP 104116 / JCM 14847 / LMG 12228 / 1C / PRS 101 / PAO1).